Reading from the N-terminus, the 88-residue chain is Small ribosomal subunit protein uS15 (88 aa).

This sequence belongs to the universal ribosomal protein uS15 family. Part of the 30S ribosomal subunit. Forms a bridge to the 50S subunit in the 70S ribosome, contacting the 23S rRNA.

Functionally, one of the primary rRNA binding proteins, it binds directly to 16S rRNA where it helps nucleate assembly of the platform of the 30S subunit by binding and bridging several RNA helices of the 16S rRNA. In terms of biological role, forms an intersubunit bridge (bridge B4) with the 23S rRNA of the 50S subunit in the ribosome. The chain is Small ribosomal subunit protein uS15 from Polaromonas sp. (strain JS666 / ATCC BAA-500).